The following is a 369-amino-acid chain: Anhydro-N-acetylmuramic acid kinase (369 aa).

12 to 19 (GTSMDGVD) contacts ATP.

Belongs to the anhydro-N-acetylmuramic acid kinase family.

It carries out the reaction 1,6-anhydro-N-acetyl-beta-muramate + ATP + H2O = N-acetyl-D-muramate 6-phosphate + ADP + H(+). It participates in amino-sugar metabolism; 1,6-anhydro-N-acetylmuramate degradation. It functions in the pathway cell wall biogenesis; peptidoglycan recycling. Functionally, catalyzes the specific phosphorylation of 1,6-anhydro-N-acetylmuramic acid (anhMurNAc) with the simultaneous cleavage of the 1,6-anhydro ring, generating MurNAc-6-P. Is required for the utilization of anhMurNAc either imported from the medium or derived from its own cell wall murein, and thus plays a role in cell wall recycling. The chain is Anhydro-N-acetylmuramic acid kinase from Shewanella sp. (strain MR-7).